Reading from the N-terminus, the 255-residue chain is Probable transcriptional regulatory protein CMM_1817 (255 aa).

This sequence belongs to the TACO1 family.

Its subcellular location is the cytoplasm. The polypeptide is Probable transcriptional regulatory protein CMM_1817 (Clavibacter michiganensis subsp. michiganensis (strain NCPPB 382)).